We begin with the raw amino-acid sequence, 82 residues long: Probable 26S proteasome complex subunit dss-1 (82 aa).

The tract at residues Asn-56–Ala-82 is disordered. A compositionally biased stretch (basic and acidic residues) spans Glu-63–Lys-76.

Belongs to the DSS1/SEM1 family. In terms of assembly, part of the 26S proteasome. Expressed in intestinal epithelium and head neurons.

The protein resides in the nucleus. It is found in the cytoplasm. Subunit of the 26S proteasome which plays a role in ubiquitin-dependent proteolysis. Has an essential role in oogenesis and larval growth. Required for intestinal function and default lifespan. This Caenorhabditis elegans protein is Probable 26S proteasome complex subunit dss-1 (dss-1).